A 58-amino-acid polypeptide reads, in one-letter code: Large ribosomal subunit protein eL24 (58 aa).

4 residues coordinate Zn(2+): cysteine 6, cysteine 9, cysteine 32, and cysteine 36. The C4-type zinc-finger motif lies at 6 to 36; that stretch reads CSFCGYDIEPGTGKMYVRRDGRVFYFCSGKC.

The protein belongs to the eukaryotic ribosomal protein eL24 family. As to quaternary structure, part of the 50S ribosomal subunit. Forms a cluster with proteins L3 and L14. It depends on Zn(2+) as a cofactor.

In terms of biological role, binds to the 23S rRNA. This chain is Large ribosomal subunit protein eL24, found in Archaeoglobus fulgidus (strain ATCC 49558 / DSM 4304 / JCM 9628 / NBRC 100126 / VC-16).